Reading from the N-terminus, the 146-residue chain is UPF0178 protein LMOf2365_1475 (146 aa).

This sequence belongs to the UPF0178 family.

The protein is UPF0178 protein LMOf2365_1475 of Listeria monocytogenes serotype 4b (strain F2365).